Reading from the N-terminus, the 336-residue chain is tRNA-dihydrouridine(20/20a) synthase (336 aa).

FMN is bound by residues 24–26 (PMM) and Gln77. Residue Cys107 is the Proton donor of the active site. FMN contacts are provided by residues Lys146, His178, 218-220 (NGG), and 240-241 (GR).

Belongs to the Dus family. DusA subfamily. FMN is required as a cofactor.

The enzyme catalyses 5,6-dihydrouridine(20) in tRNA + NADP(+) = uridine(20) in tRNA + NADPH + H(+). It carries out the reaction 5,6-dihydrouridine(20) in tRNA + NAD(+) = uridine(20) in tRNA + NADH + H(+). The catalysed reaction is 5,6-dihydrouridine(20a) in tRNA + NADP(+) = uridine(20a) in tRNA + NADPH + H(+). It catalyses the reaction 5,6-dihydrouridine(20a) in tRNA + NAD(+) = uridine(20a) in tRNA + NADH + H(+). Catalyzes the synthesis of 5,6-dihydrouridine (D), a modified base found in the D-loop of most tRNAs, via the reduction of the C5-C6 double bond in target uridines. Specifically modifies U20 and U20a in tRNAs. This is tRNA-dihydrouridine(20/20a) synthase from Pseudomonas syringae pv. tomato (strain ATCC BAA-871 / DC3000).